Consider the following 61-residue polypeptide: Large ribosomal subunit protein uL30 (61 aa).

The protein belongs to the universal ribosomal protein uL30 family. In terms of assembly, part of the 50S ribosomal subunit.

The protein is Large ribosomal subunit protein uL30 of Corynebacterium glutamicum (strain ATCC 13032 / DSM 20300 / JCM 1318 / BCRC 11384 / CCUG 27702 / LMG 3730 / NBRC 12168 / NCIMB 10025 / NRRL B-2784 / 534).